A 317-amino-acid polypeptide reads, in one-letter code: Ribosomal protein L11 methyltransferase (317 aa).

Positions 158, 179, 201, and 244 each coordinate S-adenosyl-L-methionine.

It belongs to the methyltransferase superfamily. PrmA family.

The protein localises to the cytoplasm. It catalyses the reaction L-lysyl-[protein] + 3 S-adenosyl-L-methionine = N(6),N(6),N(6)-trimethyl-L-lysyl-[protein] + 3 S-adenosyl-L-homocysteine + 3 H(+). Methylates ribosomal protein L11. This is Ribosomal protein L11 methyltransferase from Streptococcus equi subsp. zooepidemicus (strain H70).